A 145-amino-acid polypeptide reads, in one-letter code: uncharacterized protein (145 aa).

Basic and acidic residues predominate over residues 1 to 18; the sequence is MAEQQPSKEEKKEDKKDE. Residues 1–61 are disordered; sequence MAEQQPSKEE…CTEGEWDASD (61 aa).

This is an uncharacterized protein from Caenorhabditis elegans.